Reading from the N-terminus, the 202-residue chain is Pyridoxal 5'-phosphate synthase subunit PdxT (202 aa).

L-glutamine is bound at residue 52 to 54; it reads GES. The active-site Nucleophile is the Cys-84. L-glutamine-binding positions include Arg-116 and 143–144; that span reads IR. Active-site charge relay system residues include His-184 and Glu-186.

The protein belongs to the glutaminase PdxT/SNO family. As to quaternary structure, in the presence of PdxS, forms a dodecamer of heterodimers. Only shows activity in the heterodimer.

It carries out the reaction aldehydo-D-ribose 5-phosphate + D-glyceraldehyde 3-phosphate + L-glutamine = pyridoxal 5'-phosphate + L-glutamate + phosphate + 3 H2O + H(+). The catalysed reaction is L-glutamine + H2O = L-glutamate + NH4(+). Its pathway is cofactor biosynthesis; pyridoxal 5'-phosphate biosynthesis. In terms of biological role, catalyzes the hydrolysis of glutamine to glutamate and ammonia as part of the biosynthesis of pyridoxal 5'-phosphate. The resulting ammonia molecule is channeled to the active site of PdxS. The chain is Pyridoxal 5'-phosphate synthase subunit PdxT from Pyrobaculum neutrophilum (strain DSM 2338 / JCM 9278 / NBRC 100436 / V24Sta) (Thermoproteus neutrophilus).